Reading from the N-terminus, the 198-residue chain is uncharacterized protein (198 aa).

Residues 9-43 (CPVCGGKGTFVITSHQIDIPYFGPVLETTMICEKC) form a C4-type zinc finger.

It belongs to the ZPR1 family.

This is an uncharacterized protein from Methanocaldococcus jannaschii (strain ATCC 43067 / DSM 2661 / JAL-1 / JCM 10045 / NBRC 100440) (Methanococcus jannaschii).